We begin with the raw amino-acid sequence, 256 residues long: MNLDALQQRLGYRFSKPELLQQALTHRSHSAQHNERLEFLGDSVLNCAVADMLFGMFGKLDEGDLSRVRANLVKQQALYEIAQMLQLSEVLRLGEGELKSGGFRRPSILADALEAIVGAVFLDAGFEAARTLIRKLYIPILEQVDPRTLGKDAKTLLQEYLQGHKIALPQYNVIATHGAAHSQQFEVECMVPKLEVRVFGTGASRRAAEQAAAKLALDEVQKLVPQLLKRSRAERTGKTRKQPVPPDPQLSLRLKE.

The region spanning 3–125 (LDALQQRLGY…IVGAVFLDAG (123 aa)) is the RNase III domain. Glu38 contacts Mg(2+). Asp42 is a catalytic residue. Asp111 and Glu114 together coordinate Mg(2+). The active site involves Glu114. A DRBM domain is found at 152–222 (DAKTLLQEYL…AKLALDEVQK (71 aa)). Positions 229-256 (KRSRAERTGKTRKQPVPPDPQLSLRLKE) are disordered.

The protein belongs to the ribonuclease III family. In terms of assembly, homodimer. The cofactor is Mg(2+).

The protein localises to the cytoplasm. The enzyme catalyses Endonucleolytic cleavage to 5'-phosphomonoester.. Digests double-stranded RNA. Involved in the processing of primary rRNA transcript to yield the immediate precursors to the large and small rRNAs (23S and 16S). Processes some mRNAs, and tRNAs when they are encoded in the rRNA operon. Processes pre-crRNA and tracrRNA of type II CRISPR loci if present in the organism. This chain is Ribonuclease 3, found in Cupriavidus pinatubonensis (strain JMP 134 / LMG 1197) (Cupriavidus necator (strain JMP 134)).